A 1059-amino-acid chain; its full sequence is Carbamoyl phosphate synthase large chain (1059 aa).

Residues Met-1–Glu-401 form a carboxyphosphate synthetic domain region. 12 residues coordinate ATP: Arg-129, Arg-169, Gly-175, Gly-176, Arg-208, Ile-210, Glu-215, Gly-241, Ile-242, His-243, Gln-284, and Glu-298. The ATP-grasp 1 domain maps to Lys-133–Val-327. The Mg(2+) site is built by Gln-284, Glu-298, and Asn-300. Gln-284, Glu-298, and Asn-300 together coordinate Mn(2+). Residues Ile-402 to Ser-546 are oligomerization domain. The interval Ile-547–Asn-929 is carbamoyl phosphate synthetic domain. Positions Asp-671–Leu-861 constitute an ATP-grasp 2 domain. 10 residues coordinate ATP: Arg-707, Ser-746, Leu-748, Glu-752, Gly-777, Val-778, His-779, Ser-780, Gln-820, and Glu-832. Mg(2+) contacts are provided by Gln-820, Glu-832, and Asn-834. Gln-820, Glu-832, and Asn-834 together coordinate Mn(2+). Residues Ile-930–His-1059 form the MGS-like domain. The tract at residues Ile-930–His-1059 is allosteric domain.

This sequence belongs to the CarB family. Composed of two chains; the small (or glutamine) chain promotes the hydrolysis of glutamine to ammonia, which is used by the large (or ammonia) chain to synthesize carbamoyl phosphate. Tetramer of heterodimers (alpha,beta)4. Requires Mg(2+) as cofactor. It depends on Mn(2+) as a cofactor.

It catalyses the reaction hydrogencarbonate + L-glutamine + 2 ATP + H2O = carbamoyl phosphate + L-glutamate + 2 ADP + phosphate + 2 H(+). The catalysed reaction is hydrogencarbonate + NH4(+) + 2 ATP = carbamoyl phosphate + 2 ADP + phosphate + 2 H(+). It functions in the pathway amino-acid biosynthesis; L-arginine biosynthesis; carbamoyl phosphate from bicarbonate: step 1/1. Its pathway is pyrimidine metabolism; UMP biosynthesis via de novo pathway; (S)-dihydroorotate from bicarbonate: step 1/3. Functionally, large subunit of the glutamine-dependent carbamoyl phosphate synthetase (CPSase). CPSase catalyzes the formation of carbamoyl phosphate from the ammonia moiety of glutamine, carbonate, and phosphate donated by ATP, constituting the first step of 2 biosynthetic pathways, one leading to arginine and/or urea and the other to pyrimidine nucleotides. The large subunit (synthetase) binds the substrates ammonia (free or transferred from glutamine from the small subunit), hydrogencarbonate and ATP and carries out an ATP-coupled ligase reaction, activating hydrogencarbonate by forming carboxy phosphate which reacts with ammonia to form carbamoyl phosphate. The chain is Carbamoyl phosphate synthase large chain from Leuconostoc mesenteroides subsp. mesenteroides (strain ATCC 8293 / DSM 20343 / BCRC 11652 / CCM 1803 / JCM 6124 / NCDO 523 / NBRC 100496 / NCIMB 8023 / NCTC 12954 / NRRL B-1118 / 37Y).